Reading from the N-terminus, the 688-residue chain is PTS system glucoside-specific EIICBA component (688 aa).

The region spanning 3–427 is the PTS EIIC type-1 domain; it reads KKLFGQLQRI…FKLKTPGRED (425 aa). A run of 10 helical transmembrane segments spans residues 12–32, 81–101, 137–157, 182–202, 223–243, 284–304, 315–335, 340–360, 364–384, and 395–415; these read IGKA…LLAF, LGLA…YLIM, LVLG…MGAL, FVPI…SFAW, LTTF…LHHI, AFTT…AFAI, VVGG…ITEP, FLFV…TSFL, LLGV…ILYG, and LVIP…DFAI. Positions 438–519 constitute a PTS EIIB type-1 domain; it reads AKLPFDVLDA…AKIMSGEITK (82 aa). The active-site Phosphocysteine intermediate; for EIIB activity is Cys460. One can recognise a PTS EIIA type-1 domain in the interval 560–664; sequence DQVFAGKMMG…SIVTPMIITN (105 aa). The active-site Tele-phosphohistidine intermediate; for EIIA activity is His612.

It is found in the cell membrane. Functionally, the phosphoenolpyruvate-dependent sugar phosphotransferase system (sugar PTS), a major carbohydrate active -transport system, catalyzes the phosphorylation of incoming sugar substrates concomitantly with their translocation across the cell membrane. This system is involved in alpha- and beta-glucoside transport. The sequence is that of PTS system glucoside-specific EIICBA component (glcB) from Staphylococcus aureus (strain bovine RF122 / ET3-1).